The primary structure comprises 253 residues: Ribonuclease 3 (253 aa).

The RNase III domain occupies 29 to 157 (VDELQKTIGH…MLGAVFLDAG (129 aa)). Glutamate 70 provides a ligand contact to Mg(2+). Residue aspartate 74 is part of the active site. Mg(2+)-binding residues include aspartate 143 and glutamate 146. Glutamate 146 is a catalytic residue. The region spanning 184–253 (DYKSQLQELT…AARAVATLDK (70 aa)) is the DRBM domain.

This sequence belongs to the ribonuclease III family. In terms of assembly, homodimer. Mg(2+) serves as cofactor.

The protein resides in the cytoplasm. It carries out the reaction Endonucleolytic cleavage to 5'-phosphomonoester.. In terms of biological role, digests double-stranded RNA. Involved in the processing of primary rRNA transcript to yield the immediate precursors to the large and small rRNAs (23S and 16S). Processes some mRNAs, and tRNAs when they are encoded in the rRNA operon. Processes pre-crRNA and tracrRNA of type II CRISPR loci if present in the organism. The polypeptide is Ribonuclease 3 (Nitratidesulfovibrio vulgaris (strain ATCC 29579 / DSM 644 / CCUG 34227 / NCIMB 8303 / VKM B-1760 / Hildenborough) (Desulfovibrio vulgaris)).